Here is a 131-residue protein sequence, read N- to C-terminus: CDGSH iron-sulfur domain-containing protein 2 homolog (131 aa).

Residues 1–35 (MQSLSHAVKTSLPNYLSSLPVPDSVGGWFKLSFKD) lie on the Lumenal side of the membrane. The chain crosses the membrane as a helical span at residues 36–58 (WLALIPPTAVVVGIGYISYQALC). Topologically, residues 59–131 (PAAQRKSCSG…NVGPVVIKRN (73 aa)) are cytoplasmic. [2Fe-2S] cluster is bound by residues C97, C99, C108, and H112.

The protein belongs to the CISD protein family. CISD2 subfamily. It depends on [2Fe-2S] cluster as a cofactor.

It localises to the endoplasmic reticulum membrane. This chain is CDGSH iron-sulfur domain-containing protein 2 homolog, found in Drosophila mojavensis (Fruit fly).